The following is a 35-amino-acid chain: Ranatuerin-2SPa (35 aa).

The cysteines at positions 28 and 33 are disulfide-linked.

As to expression, expressed by the skin glands.

It localises to the secreted. In terms of biological role, antibacterial activity against Gram-positive bacterium S.aureus. Shows no detectable hemolytic activity towards human erythrocytes. In Lithobates septentrionalis (Mink frog), this protein is Ranatuerin-2SPa.